The chain runs to 312 residues: MSLNCKDLLGLEHLGKKDLQTILDSVGPFKSLFTRSVKKVPTLVGKTVVTLFYEPSTRTRNSFEIAAKRLSADVVNVTVNTSSIVKGESLIDTGKTLEAMKADYLIIRHSLAGAPDILARNLNASIINAGDGFHEHPTQGLLDLYTMYEKKKKIEGLKVLLVGDILHSRVAKSNIWALIKMGAEIAVVGPPTLIPSNIEDLGVKVYYDLNEAIKKVDVVNILRIQLERQQENLFPSVHEYVELYQVTEERLAMAKPGVLIMHPGPMNRGIEISSDVADSPNAVINEQVTNGIAVRMAVLCLLKPKRKNASSD.

Residues arginine 58 and threonine 59 each coordinate carbamoyl phosphate. Lysine 86 contributes to the L-aspartate binding site. 3 residues coordinate carbamoyl phosphate: arginine 108, histidine 136, and glutamine 139. The L-aspartate site is built by arginine 169 and arginine 223. Carbamoyl phosphate-binding residues include glycine 264 and proline 265.

This sequence belongs to the aspartate/ornithine carbamoyltransferase superfamily. ATCase family. Heterododecamer (2C3:3R2) of six catalytic PyrB chains organized as two trimers (C3), and six regulatory PyrI chains organized as three dimers (R2).

It catalyses the reaction carbamoyl phosphate + L-aspartate = N-carbamoyl-L-aspartate + phosphate + H(+). It participates in pyrimidine metabolism; UMP biosynthesis via de novo pathway; (S)-dihydroorotate from bicarbonate: step 2/3. Catalyzes the condensation of carbamoyl phosphate and aspartate to form carbamoyl aspartate and inorganic phosphate, the committed step in the de novo pyrimidine nucleotide biosynthesis pathway. The sequence is that of Aspartate carbamoyltransferase catalytic subunit from Endomicrobium trichonymphae.